The primary structure comprises 344 residues: Dihydroorotase (344 aa).

Zn(2+) is bound by residues histidine 13 and histidine 15. Substrate is bound by residues 15–17 (HVR) and asparagine 41. Zn(2+) is bound by residues lysine 99, histidine 136, and histidine 174. Position 99 is an N6-carboxylysine (lysine 99). Histidine 136 is a substrate binding site. Leucine 219 contacts substrate. Aspartate 247 is a Zn(2+) binding site. The active site involves aspartate 247. Substrate is bound by residues histidine 251 and alanine 263.

This sequence belongs to the metallo-dependent hydrolases superfamily. DHOase family. Class II DHOase subfamily. In terms of assembly, homodimer. Zn(2+) serves as cofactor.

It carries out the reaction (S)-dihydroorotate + H2O = N-carbamoyl-L-aspartate + H(+). It functions in the pathway pyrimidine metabolism; UMP biosynthesis via de novo pathway; (S)-dihydroorotate from bicarbonate: step 3/3. Functionally, catalyzes the reversible cyclization of carbamoyl aspartate to dihydroorotate. This chain is Dihydroorotase, found in Azoarcus sp. (strain BH72).